Consider the following 221-residue polypeptide: Ras-related protein Rab-28 (221 aa).

Position 2 is an N-acetylserine (Ser2). Phosphoserine is present on Ser8. The GTP site is built by Gly21, Gly24, Lys25, Thr26, Ser27, Gly38, Lys39, Tyr41, and Thr44. A Mg(2+)-binding site is contributed by Thr26. Positions 35-49 (ETFGKQYKQTIGLDF) are switch I. Residues Thr44 and Asp68 each contribute to the Mg(2+) site. A switch II region spans residues 68–85 (DIGGQTIGGKMLDKYIYG). Gly71, Asn129, Lys130, Asp132, Ala160, and Lys161 together coordinate GTP. Cys218 is subject to Cysteine methyl ester. Cys218 carries the S-farnesyl cysteine lipid modification. Residues 219–221 (AVQ) constitute a propeptide, removed in mature form.

It belongs to the small GTPase superfamily. Rab family. As to quaternary structure, interacts (prenylated form) with PDE6D; the interaction promotes RAB28 delivery to the photoreceptor outer segments. Interacts with KCNJ13; the interaction may facilitate cone outer segments phagocytosis. Interacts with RELA; the interaction contributes to RELA transport from cytoplasm to nucleus. The cofactor is Mg(2+). Isoprenylated. In terms of tissue distribution, testis, brain, and to much lower levels heart, skeletal muscle and fat cells. Expressed in the retina.

It is found in the cell membrane. It localises to the cytoplasm. The protein localises to the cytoskeleton. Its subcellular location is the cilium basal body. The protein resides in the nucleus. It carries out the reaction GTP + H2O = GDP + phosphate + H(+). Its activity is regulated as follows. Regulated by guanine nucleotide exchange factors (GEFs) which promote the exchange of bound GDP for free GTP. Regulated by GTPase activating proteins (GAPs) which increase the GTP hydrolysis activity. Inhibited by GDP dissociation inhibitors (GDIs). Its function is as follows. The small GTPases Rab are key regulators of intracellular membrane trafficking, from the formation of transport vesicles to their fusion with membranes. Rabs cycle between an inactive GDP-bound form and an active GTP-bound form that is able to recruit to membranes different sets of downstream effectors directly responsible for vesicle formation, movement, tethering and fusion. RAB28 is required for shedding and phagocytosis of cone cell outer segments (OS) discs in the retina. Also participates in nuclear factor kappa-B p65/RELA nuclear transport in endothelial cells. This chain is Ras-related protein Rab-28, found in Rattus norvegicus (Rat).